Here is a 102-residue protein sequence, read N- to C-terminus: Small ribosomal subunit protein uS10 (102 aa).

Belongs to the universal ribosomal protein uS10 family. As to quaternary structure, part of the 30S ribosomal subunit.

Its function is as follows. Involved in the binding of tRNA to the ribosomes. This chain is Small ribosomal subunit protein uS10, found in Acidiphilium cryptum (strain JF-5).